We begin with the raw amino-acid sequence, 388 residues long: Chorismate synthase (388 aa).

NADP(+)-binding residues include Arg-39 and Arg-45. Residues 95-118 form a disordered region; the sequence is EKNEKSRRVSRPRPGHADLVGGMK. FMN-binding positions include 130-132, 251-252, Gly-296, 311-315, and Arg-337; these read RSS, NA, and KPIPT.

It belongs to the chorismate synthase family. In terms of assembly, homotetramer. FMNH2 serves as cofactor.

The catalysed reaction is 5-O-(1-carboxyvinyl)-3-phosphoshikimate = chorismate + phosphate. It functions in the pathway metabolic intermediate biosynthesis; chorismate biosynthesis; chorismate from D-erythrose 4-phosphate and phosphoenolpyruvate: step 7/7. In terms of biological role, catalyzes the anti-1,4-elimination of the C-3 phosphate and the C-6 proR hydrogen from 5-enolpyruvylshikimate-3-phosphate (EPSP) to yield chorismate, which is the branch point compound that serves as the starting substrate for the three terminal pathways of aromatic amino acid biosynthesis. This reaction introduces a second double bond into the aromatic ring system. This Listeria monocytogenes serotype 4b (strain CLIP80459) protein is Chorismate synthase.